The chain runs to 250 residues: 2,3-bisphosphoglycerate-dependent phosphoglycerate mutase (250 aa).

Residues 10–17 (RHGESQWN), 23–24 (TG), R62, 89–92 (ERHY), K100, 116–117 (RR), and 185–186 (GN) each bind substrate. H11 acts as the Tele-phosphohistidine intermediate in catalysis. The active-site Proton donor/acceptor is the E89.

The protein belongs to the phosphoglycerate mutase family. BPG-dependent PGAM subfamily. Homodimer.

It carries out the reaction (2R)-2-phosphoglycerate = (2R)-3-phosphoglycerate. The protein operates within carbohydrate degradation; glycolysis; pyruvate from D-glyceraldehyde 3-phosphate: step 3/5. Catalyzes the interconversion of 2-phosphoglycerate and 3-phosphoglycerate. The polypeptide is 2,3-bisphosphoglycerate-dependent phosphoglycerate mutase (Cronobacter sakazakii (strain ATCC BAA-894) (Enterobacter sakazakii)).